Here is a 112-residue protein sequence, read N- to C-terminus: uncharacterized protein (112 aa).

The interval 90 to 112 (KNFNNSKNDQIKKKKIDNNQVNL) is disordered.

This is an uncharacterized protein from Buchnera aphidicola subsp. Acyrthosiphon pisum (strain APS) (Acyrthosiphon pisum symbiotic bacterium).